A 112-amino-acid polypeptide reads, in one-letter code: UPF0060 membrane protein SAV_4756 (112 aa).

4 helical membrane-spanning segments follow: residues 8–28, 33–53, 62–82, and 91–111; these read ALFV…WQGV, GWLW…VATL, ILAA…MVAD, and VTGA…PRGG.

The protein belongs to the UPF0060 family.

It localises to the cell membrane. This is UPF0060 membrane protein SAV_4756 from Streptomyces avermitilis (strain ATCC 31267 / DSM 46492 / JCM 5070 / NBRC 14893 / NCIMB 12804 / NRRL 8165 / MA-4680).